A 429-amino-acid polypeptide reads, in one-letter code: Antho-RFamide neuropeptides type 2 (429 aa).

The signal sequence occupies residues 1 to 22 (MTTVSYVTILLTVLVQVLTSDA). The propeptide occupies 23–233 (KATNNKRELS…EFQGRFGRED (211 aa)). The segment covering 230–371 (GREDQGRFGR…EDIAKEDQGR (142 aa)) has biased composition (basic and acidic residues). The segment at 230–429 (GREDQGRFGR…KSDDALAKIS (200 aa)) is disordered. A Pyrrolidone carboxylic acid modification is found at Gln-234. The residue at position 237 (Phe-237) is a Phenylalanine amide. A propeptide spanning residues 239-241 (RED) is cleaved from the precursor. Gln-242 carries the post-translational modification Pyrrolidone carboxylic acid. Phe-245 carries the post-translational modification Phenylalanine amide. The propeptide occupies 247 to 249 (RED). Gln-250 carries the pyrrolidone carboxylic acid modification. Phenylalanine amide is present on Phe-253. The propeptide occupies 255-257 (RED). Gln-258 is subject to Pyrrolidone carboxylic acid. At Phe-261 the chain carries Phenylalanine amide. The propeptide occupies 263 to 265 (RED). The residue at position 266 (Gln-266) is a Pyrrolidone carboxylic acid. Position 269 is a phenylalanine amide (Phe-269). Residues 271–273 (RED) constitute a propeptide that is removed on maturation. The residue at position 274 (Gln-274) is a Pyrrolidone carboxylic acid. Residue Phe-277 is modified to Phenylalanine amide. Residues 279 to 289 (RELQGRFGRED) constitute a propeptide that is removed on maturation. Gln-290 bears the Pyrrolidone carboxylic acid mark. At Phe-293 the chain carries Phenylalanine amide. Residues 295–297 (RED) constitute a propeptide that is removed on maturation. Gln-298 carries the pyrrolidone carboxylic acid modification. Residue Phe-301 is modified to Phenylalanine amide. The propeptide occupies 303–305 (RED). A Pyrrolidone carboxylic acid modification is found at Gln-306. Phe-309 carries the post-translational modification Phenylalanine amide. A propeptide spanning residues 311-321 (RELQGRFGRED) is cleaved from the precursor. Gln-322 carries the post-translational modification Pyrrolidone carboxylic acid. Phe-325 carries the post-translational modification Phenylalanine amide. Positions 327-329 (RED) are excised as a propeptide. Gln-330 is subject to Pyrrolidone carboxylic acid. Phe-333 bears the Phenylalanine amide mark. Residues 335 to 342 (REDLAKED) constitute a propeptide that is removed on maturation. At Gln-343 the chain carries Pyrrolidone carboxylic acid. The residue at position 346 (Phe-346) is a Phenylalanine amide. A propeptide spanning residues 348–355 (REDLAKED) is cleaved from the precursor. At Gln-356 the chain carries Pyrrolidone carboxylic acid. Phe-359 carries the post-translational modification Phenylalanine amide. Residues 361–368 (REDIAKED) constitute a propeptide that is removed on maturation. Pyrrolidone carboxylic acid is present on Gln-369. Phe-372 carries the phenylalanine amide modification. A propeptide spanning residues 374–429 (RNAAAAAKKRTIDVIDIESDPKPQTRFRDGKDMQEKRKVEKKDKIEKSDDALAKIS) is cleaved from the precursor. Residues 392 to 429 (SDPKPQTRFRDGKDMQEKRKVEKKDKIEKSDDALAKIS) are compositionally biased toward basic and acidic residues.

This sequence belongs to the FARP (FMRFamide related peptide) family.

Its subcellular location is the secreted. Its function is as follows. Not known but it could act as a transmitter at neuromuscular synapses. The sequence is that of Antho-RFamide neuropeptides type 2 from Anthopleura elegantissima (Green aggregating anemone).